A 223-amino-acid polypeptide reads, in one-letter code: Probable amino-acid ABC transporter permease protein PatM (223 aa).

The 192-residue stretch at leucine 19–glutamine 210 folds into the ABC transmembrane type-1 domain. 5 helical membrane passes run methionine 23 to isoleucine 43, isoleucine 59 to leucine 78, alanine 90 to isoleucine 110, phenylalanine 156 to alanine 176, and phenylalanine 186 to leucine 206.

The protein belongs to the binding-protein-dependent transport system permease family. HisMQ subfamily.

Its subcellular location is the cell inner membrane. Its function is as follows. Probably part of a binding-protein-dependent transport system for an amino acid. Probably responsible for the translocation of the substrate across the membrane. In Vibrio harveyi (Beneckea harveyi), this protein is Probable amino-acid ABC transporter permease protein PatM (patM).